A 107-amino-acid chain; its full sequence is DNA-directed RNA polymerase subunit omega (107 aa).

Belongs to the RNA polymerase subunit omega family. As to quaternary structure, the RNAP catalytic core consists of 2 alpha, 1 beta, 1 beta' and 1 omega subunit. When a sigma factor is associated with the core the holoenzyme is formed, which can initiate transcription.

It catalyses the reaction RNA(n) + a ribonucleoside 5'-triphosphate = RNA(n+1) + diphosphate. In terms of biological role, promotes RNA polymerase assembly. Latches the N- and C-terminal regions of the beta' subunit thereby facilitating its interaction with the beta and alpha subunits. The protein is DNA-directed RNA polymerase subunit omega of Mycolicibacterium smegmatis (strain ATCC 700084 / mc(2)155) (Mycobacterium smegmatis).